Consider the following 395-residue polypeptide: S-adenosylmethionine synthase (395 aa).

An ATP-binding site is contributed by histidine 18. Mg(2+) is bound at residue aspartate 20. Glutamate 46 contributes to the K(+) binding site. Glutamate 59 and glutamine 103 together coordinate L-methionine. The segment at 103-113 is flexible loop; the sequence is QSADIAVGVDS. Residues 170 to 172, aspartate 244, 250 to 251, alanine 267, and lysine 271 each bind ATP; these read DAK and RK. L-methionine is bound at residue aspartate 244. An L-methionine-binding site is contributed by lysine 275.

This sequence belongs to the AdoMet synthase family. As to quaternary structure, homotetramer; dimer of dimers. Requires Mg(2+) as cofactor. K(+) is required as a cofactor.

Its subcellular location is the cytoplasm. It carries out the reaction L-methionine + ATP + H2O = S-adenosyl-L-methionine + phosphate + diphosphate. The protein operates within amino-acid biosynthesis; S-adenosyl-L-methionine biosynthesis; S-adenosyl-L-methionine from L-methionine: step 1/1. Functionally, catalyzes the formation of S-adenosylmethionine (AdoMet) from methionine and ATP. The overall synthetic reaction is composed of two sequential steps, AdoMet formation and the subsequent tripolyphosphate hydrolysis which occurs prior to release of AdoMet from the enzyme. This Gluconacetobacter diazotrophicus (strain ATCC 49037 / DSM 5601 / CCUG 37298 / CIP 103539 / LMG 7603 / PAl5) protein is S-adenosylmethionine synthase.